Here is a 134-residue protein sequence, read N- to C-terminus: MPPKTRAAGAKKVRRKEKKNVAHGHAHIKSTFNNTIVSITDPTGNVISWASAGHVGFKGSRKSTPFAAQMAAENAARKAQEHGMRKVDVFVKGPGSGRETAIRSLQAAGLEVGAIQDVTPTPHNGCRPPKRRRV.

Belongs to the universal ribosomal protein uS11 family. Part of the 30S ribosomal subunit. Interacts with proteins S7 and S18. Binds to IF-3.

Located on the platform of the 30S subunit, it bridges several disparate RNA helices of the 16S rRNA. Forms part of the Shine-Dalgarno cleft in the 70S ribosome. This Frankia alni (strain DSM 45986 / CECT 9034 / ACN14a) protein is Small ribosomal subunit protein uS11.